The primary structure comprises 92 residues: MATTMRLDKYLKVSRLIKRRTVAKEVAEKGRIAVNGVTAKPGTNVKSGDELVIRFGPKIVTAKIERLEENAKKEQATEMYTIIKEERTDESR.

Residues 5 to 65 (MRLDKYLKVS…GPKIVTAKIE (61 aa)) enclose the S4 RNA-binding domain.

The protein belongs to the RqcP family. Associates with stalled 50S ribosomal subunits. Binds to RqcH, 23S rRNA and the P-site tRNA. Does not require RqcH for association with 50S subunits.

In terms of biological role, key component of the ribosome quality control system (RQC), a ribosome-associated complex that mediates the extraction of incompletely synthesized nascent chains from stalled ribosomes and their subsequent degradation. RqcH recruits Ala-charged tRNA, and with RqcP directs the elongation of stalled nascent chains on 50S ribosomal subunits, leading to non-templated C-terminal alanine extensions (Ala tail). The Ala tail promotes nascent chain degradation. RqcP is associated with the translocation-like movement of the peptidyl-tRNA from the A-site into the P-site. This chain is RQC P-site tRNA stabilizing factor, found in Listeria monocytogenes serovar 1/2a (strain ATCC BAA-679 / EGD-e).